Here is a 269-residue protein sequence, read N- to C-terminus: Membrane protein insertase YidC 1 (269 aa).

The signal sequence occupies residues 1–20 (MKKKFSLIAMAGAALLLLTA). The N-palmitoyl cysteine moiety is linked to residue Cys21. Residue Cys21 is the site of S-diacylglycerol cysteine attachment. 4 helical membrane-spanning segments follow: residues 45–65 (IRFLSFGGLTGVGIILFTIVI), 124–144 (YMGCLPLVVQMPVLWALYQAL), 165–185 (PTFILPILAAVFTFLSSYLMM), and 203–223 (PIFILIMGVNFAAGIALYWVI).

The protein belongs to the OXA1/ALB3/YidC family. Type 2 subfamily.

Its subcellular location is the cell membrane. In terms of biological role, required for the insertion and/or proper folding and/or complex formation of integral membrane proteins into the membrane. Involved in integration of membrane proteins that insert both dependently and independently of the Sec translocase complex, as well as at least some lipoproteins. This Lactococcus lactis subsp. lactis (strain IL1403) (Streptococcus lactis) protein is Membrane protein insertase YidC 1.